The sequence spans 879 residues: Metabotropic glutamate receptor 3 (879 aa).

A signal peptide spans 1 to 22; that stretch reads MKMLTRLQVLTLALFSKGFLLS. Over 23-576 the chain is Extracellular; that stretch reads LGDHNFLRRE…EDYIRWEDAW (554 aa). The cysteines at positions 57 and 99 are disulfide-linked. Residues serine 151 and 172 to 174 contribute to the L-glutamate site; that span reads AST. An N-linked (GlcNAc...) asparagine glycan is attached at asparagine 209. Tyrosine 222 is a binding site for L-glutamate. Cystine bridges form between cysteine 240–cysteine 527, cysteine 361–cysteine 373, cysteine 412–cysteine 419, cysteine 509–cysteine 528, cysteine 513–cysteine 531, cysteine 534–cysteine 546, and cysteine 549–cysteine 562. An N-linked (GlcNAc...) asparagine glycan is attached at asparagine 292. Position 301 (aspartate 301) interacts with L-glutamate. Residue lysine 389 participates in L-glutamate binding. Asparagine 414 and asparagine 439 each carry an N-linked (GlcNAc...) asparagine glycan. Residues 577–599 form a helical membrane-spanning segment; it reads AIGPVTIACLGFMCTCMVVTVFI. Over 600–613 the chain is Cytoplasmic; the sequence is KHNNTPLVKASGRE. Residues 614-634 traverse the membrane as a helical segment; that stretch reads LCYILLFGVGLSYCMTFFFIA. Residues 635–645 are Extracellular-facing; sequence KPSPVICALRR. The helical transmembrane segment at 646-664 threads the bilayer; it reads LGLGSSFAICYSALLTKTN. Residues 665 to 688 are Cytoplasmic-facing; it reads CIARIFDGVKNGAQRPKFISPSSQ. A helical membrane pass occupies residues 689 to 709; that stretch reads VFICLGLILVQIVMVSVWLIL. At 710–734 the chain is on the extracellular side; sequence EAPGTRRYTLAEKRETVILKCNVKD. The helical transmembrane segment at 735-756 threads the bilayer; the sequence is SSMLISLTYDVILVILCTVYAF. At 757 to 769 the chain is on the cytoplasmic side; that stretch reads KTRKCPENFNEAK. The chain crosses the membrane as a helical span at residues 770–792; it reads FIGFTMYTTCIIWLAFLPIFYVT. Over 793-802 the chain is Extracellular; the sequence is SSDYRVQTTT. A helical membrane pass occupies residues 803–828; sequence MCISVSLSGFVVLGCLFAPKVHIILF. Topologically, residues 829–879 are cytoplasmic; the sequence is QPQKNVVTHRLHLNRFSVSGTGTTYSQSSASTYVPTVCNGREVLDSTTSSL.

This sequence belongs to the G-protein coupled receptor 3 family. In terms of assembly, interacts with TAMALIN. In terms of tissue distribution, detected in brain cortex, thalamus, subthalamic nucleus, substantia nigra, hypothalamus, hippocampus, corpus callosum, caudate nucleus and amygdala.

It localises to the cell membrane. In terms of biological role, G-protein coupled receptor for glutamate. Ligand binding causes a conformation change that triggers signaling via guanine nucleotide-binding proteins (G proteins) and modulates the activity of down-stream effectors. Signaling inhibits adenylate cyclase activity. The sequence is that of Metabotropic glutamate receptor 3 (GRM3) from Homo sapiens (Human).